The primary structure comprises 363 residues: NADH-quinone oxidoreductase subunit H (363 aa).

Transmembrane regions (helical) follow at residues 29-49 (VLKI…YVVW), 62-82 (GPMY…KLLF), 96-116 (FIIA…VVPF), 127-147 (VGLL…ILAG), 163-183 (AAQV…VMIA), 202-222 (FFDW…VSGV), 238-257 (EIVA…LFFL), 278-298 (WLSP…DWLW), 299-319 (KGGW…YIWF), and 339-359 (FIPL…YGVI).

The protein belongs to the complex I subunit 1 family. NDH-1 is composed of 14 different subunits. Subunits NuoA, H, J, K, L, M, N constitute the membrane sector of the complex.

The protein localises to the cell inner membrane. The catalysed reaction is a quinone + NADH + 5 H(+)(in) = a quinol + NAD(+) + 4 H(+)(out). NDH-1 shuttles electrons from NADH, via FMN and iron-sulfur (Fe-S) centers, to quinones in the respiratory chain. The immediate electron acceptor for the enzyme in this species is believed to be ubiquinone. Couples the redox reaction to proton translocation (for every two electrons transferred, four hydrogen ions are translocated across the cytoplasmic membrane), and thus conserves the redox energy in a proton gradient. This subunit may bind ubiquinone. The protein is NADH-quinone oxidoreductase subunit H of Xanthomonas oryzae pv. oryzae (strain MAFF 311018).